The following is a 432-amino-acid chain: Glutamate-1-semialdehyde 2,1-aminomutase (432 aa).

At K265 the chain carries N6-(pyridoxal phosphate)lysine.

This sequence belongs to the class-III pyridoxal-phosphate-dependent aminotransferase family. HemL subfamily. In terms of assembly, homodimer. Requires pyridoxal 5'-phosphate as cofactor.

Its subcellular location is the cytoplasm. It carries out the reaction (S)-4-amino-5-oxopentanoate = 5-aminolevulinate. Its pathway is porphyrin-containing compound metabolism; protoporphyrin-IX biosynthesis; 5-aminolevulinate from L-glutamyl-tRNA(Glu): step 2/2. The protein is Glutamate-1-semialdehyde 2,1-aminomutase of Photobacterium profundum (strain SS9).